The sequence spans 85 residues: U4-theraphotoxin-Hhn1a (85 aa).

Residues 1-22 (MKVTLISILTCAAVLVLHTTAA) form the signal peptide. A propeptide spanning residues 23-48 (EELEAESQLMEVGMPDTELAAVDEER) is cleaved from the precursor. Cystine bridges form between cysteine 52/cysteine 66, cysteine 56/cysteine 77, and cysteine 71/cysteine 82.

This sequence belongs to the neurotoxin 12 (Hwtx-2) family. 02 (Hwtx-2) subfamily. Monomer. In terms of tissue distribution, expressed by the venom gland.

It is found in the secreted. Neurotoxin active on both insects and mammals. The protein is U4-theraphotoxin-Hhn1a of Cyriopagopus hainanus (Chinese bird spider).